The chain runs to 377 residues: Testis-expressed protein 13A (377 aa).

Residues 92–377 form a required for repression of transcription region; that stretch reads WLQDLSSLHK…CGKGIWLQNP (286 aa). The stretch at 122 to 156 forms a coiled coil; the sequence is QKEVALQLQMAQAKLEEVQRERDLLRLKILQAELR. Residues 142–165 form an LRR repeat; it reads ERDLLRLKILQAELRALPNAVRPA. Residues 345-369 form a RanBP2-type zinc finger; the sequence is RPGDWDCPWCKAVNFSRRENCFHCG. Zn(2+)-binding residues include C351, C354, C365, and C368.

It belongs to the TEX13 family. In terms of assembly, interacts with CNOT1; the interaction may inhibit CNOT1 binding to mRNA and subsequently CNOT1-mediated mRNA degradation.

Functionally, binds to ssRNA containing the consensus sequence 5'-AGGUAA-3'. Plays a role in transcriptional repression. Required for rapid sperm motility and timely degradation of mRNA via its interaction with CNOT1. The polypeptide is Testis-expressed protein 13A (Mus musculus (Mouse)).